The sequence spans 202 residues: Proteasome subunit beta 1 (202 aa).

The propeptide at 1 to 8 is removed in mature form; by autocatalysis; the sequence is MGEVVLPG. The Nucleophile role is filled by threonine 9.

The protein belongs to the peptidase T1B family. As to quaternary structure, the 20S proteasome core is composed of 14 alpha and 14 beta subunits that assemble into four stacked heptameric rings, resulting in a barrel-shaped structure. The two inner rings, each composed of seven catalytic beta subunits, are sandwiched by two outer rings, each composed of seven alpha subunits. The catalytic chamber with the active sites is on the inside of the barrel. Has a gated structure, the ends of the cylinder being occluded by the N-termini of the alpha-subunits. Is capped at one or both ends by the proteasome regulatory ATPase, PAN.

The protein resides in the cytoplasm. It carries out the reaction Cleavage of peptide bonds with very broad specificity.. The formation of the proteasomal ATPase PAN-20S proteasome complex, via the docking of the C-termini of PAN into the intersubunit pockets in the alpha-rings, triggers opening of the gate for substrate entry. Interconversion between the open-gate and close-gate conformations leads to a dynamic regulation of the 20S proteasome proteolysis activity. Its function is as follows. Component of the proteasome core, a large protease complex with broad specificity involved in protein degradation. In Desulfurococcus amylolyticus (strain DSM 18924 / JCM 16383 / VKM B-2413 / 1221n) (Desulfurococcus kamchatkensis), this protein is Proteasome subunit beta 1.